Here is a 141-residue protein sequence, read N- to C-terminus: MVDMDRISISLPTKLLGEFDEIIGDRGYASRSEAIRDSIRDYIIKHKWIHSLEGERSGTITIIYDHHASDLMERITTIQHDYSNLIVATLHMHMDHDNCMEVVIVRGDAKIIRELTDRLTSQKGVKQVKLNVMVPGGNIPE.

Ni(2+)-binding residues include histidine 80, histidine 91, histidine 93, and cysteine 99.

The protein belongs to the transcriptional regulatory CopG/NikR family. Requires Ni(2+) as cofactor.

Transcriptional regulator. The polypeptide is Putative nickel-responsive regulator (Methanococcus aeolicus (strain ATCC BAA-1280 / DSM 17508 / OCM 812 / Nankai-3)).